The chain runs to 515 residues: DNA-directed RNA polymerase subunit Rpo2N (515 aa).

It belongs to the RNA polymerase beta chain family. In terms of assembly, part of the RNA polymerase complex.

Its subcellular location is the cytoplasm. The catalysed reaction is RNA(n) + a ribonucleoside 5'-triphosphate = RNA(n+1) + diphosphate. Functionally, DNA-dependent RNA polymerase (RNAP) catalyzes the transcription of DNA into RNA using the four ribonucleoside triphosphates as substrates. The Rpo2 subunit (Rpo2N and Rpo2C in this organism) is implicated in DNA promoter recognition and in nucleotide binding. This is DNA-directed RNA polymerase subunit Rpo2N from Methanothermobacter thermautotrophicus (strain Winter) (Methanobacterium thermoautotrophicum).